Here is a 113-residue protein sequence, read N- to C-terminus: TYRO protein tyrosine kinase-binding protein (113 aa).

Positions 1 to 27 (MGGLEPCSRLLLLPLLLAVGGLRPVQA) are cleaved as a signal peptide. Topologically, residues 28 to 40 (QAQSDCSCSTVSP) are extracellular. The chain crosses the membrane as a helical span at residues 41-61 (GVLAGIVLGDLVLTVLIALAV). D50 is a binding site for Ca(2+). Over 62–113 (YFLGRLVPRGRGAAEAATRKQRITETESPYQELQGQRSDVYSDLNTQRPYYK) the chain is Cytoplasmic. The segment at 75 to 113 (AEAATRKQRITETESPYQELQGQRSDVYSDLNTQRPYYK) is disordered. Residues 80 to 108 (RKQRITETESPYQELQGQRSDVYSDLNTQ) form the ITAM domain. Residues 87–113 (TESPYQELQGQRSDVYSDLNTQRPYYK) show a composition bias toward polar residues. Y91 and Y102 each carry phosphotyrosine.

This sequence belongs to the TYROBP family. Homodimer; disulfide-linked. Homotrimer; disulfide-linked. Homotetramer; disulfide-linked. Homotrimers and homotetramers form when low levels of partner receptors are available and is competitive with assembly with interacting receptors. They may represent alternative oligomerization states or may be intermediates in the receptor assembly process. Binding of a metal cation aids in homooligomerization through coordination of the metal ion by the subunits of the oligomer. Interacts with TREM1. Interacts with TREM2. Interacts with CLECSF5. Interacts with CD300LB and CD300C2. Interacts with CD300E. Interacts (via ITAM domain) with SYK (via SH2 domains); activates SYK mediating neutrophils and macrophages integrin-mediated activation. Interacts with KLRC2. Interacts with CD300H. Interacts with KLRD1. Following ligand binding by associated receptors, tyrosine phosphorylated in the ITAM domain which leads to activation of additional tyrosine kinases and subsequent cell activation.

It is found in the cell membrane. In terms of biological role, adapter protein which non-covalently associates with activating receptors found on the surface of a variety of immune cells to mediate signaling and cell activation following ligand binding by the receptors. TYROBP is tyrosine-phosphorylated in the ITAM domain following ligand binding by the associated receptors which leads to activation of additional tyrosine kinases and subsequent cell activation. Also has an inhibitory role in some cells. Non-covalently associates with activating receptors of the CD300 family to mediate cell activation. Also mediates cell activation through association with activating receptors of the CD200R family. Required for neutrophil activation mediated by integrin. Required for the activation of myeloid cells mediated by the CLEC5A/MDL1 receptor. Associates with natural killer (NK) cell receptors such as the KLRD1/KLRC2 heterodimer to mediate NK cell activation. Associates with TREM1 to mediate activation of neutrophils and monocytes. Associates with TREM2 on monocyte-derived dendritic cells to mediate up-regulation of chemokine receptor CCR7 and dendritic cell maturation and survival. Association with TREM2 mediates cytokine-induced formation of multinucleated giant cells which are formed by the fusion of macrophages. Stabilizes the TREM2 C-terminal fragment (TREM2-CTF) produced by TREM2 ectodomain shedding which suppresses the release of pro-inflammatory cytokines. In microglia, required with TREM2 for phagocytosis of apoptotic neurons. Required with ITGAM/CD11B in microglia to control production of microglial superoxide ions which promote the neuronal apoptosis that occurs during brain development. Promotes pro-inflammatory responses in microglia following nerve injury which accelerates degeneration of injured neurons. Positively regulates the expression of the IRAK3/IRAK-M kinase and IL10 production by liver dendritic cells and inhibits their T cell allosimulatory ability. Negatively regulates B cell proliferation. Required for CSF1-mediated osteoclast cytoskeletal organization. Positively regulates multinucleation during osteoclast development. In Macaca mulatta (Rhesus macaque), this protein is TYRO protein tyrosine kinase-binding protein.